The sequence spans 498 residues: UPF0371 protein cauri_2449 (498 aa).

It belongs to the UPF0371 family.

The polypeptide is UPF0371 protein cauri_2449 (Corynebacterium aurimucosum (strain ATCC 700975 / DSM 44827 / CIP 107346 / CN-1) (Corynebacterium nigricans)).